Consider the following 203-residue polypeptide: Dephospho-CoA kinase (203 aa).

A DPCK domain is found at 3–202 (KIGLTGSIGM…MRIAKGDFRN (200 aa)). 11–16 (GMGKST) provides a ligand contact to ATP.

Belongs to the CoaE family.

It is found in the cytoplasm. It carries out the reaction 3'-dephospho-CoA + ATP = ADP + CoA + H(+). Its pathway is cofactor biosynthesis; coenzyme A biosynthesis; CoA from (R)-pantothenate: step 5/5. Its function is as follows. Catalyzes the phosphorylation of the 3'-hydroxyl group of dephosphocoenzyme A to form coenzyme A. The protein is Dephospho-CoA kinase of Rhizobium etli (strain ATCC 51251 / DSM 11541 / JCM 21823 / NBRC 15573 / CFN 42).